Here is a 231-residue protein sequence, read N- to C-terminus: Ion-translocating oxidoreductase complex subunit E (231 aa).

6 helical membrane passes run 18 to 38, 39 to 59, 63 to 83, 86 to 106, 125 to 145, and 182 to 202; these read ALVQ…ATNA, LGLG…ISTL, TPAE…VSAV, LINA…PLIV, ALSA…MFVL, and PFLL…MLAG.

It belongs to the NqrDE/RnfAE family. In terms of assembly, the complex is composed of six subunits: RsxA, RsxB, RsxC, RsxD, RsxE and RsxG.

It is found in the cell inner membrane. Part of a membrane-bound complex that couples electron transfer with translocation of ions across the membrane. Required to maintain the reduced state of SoxR. The protein is Ion-translocating oxidoreductase complex subunit E of Shigella boydii serotype 18 (strain CDC 3083-94 / BS512).